A 1341-amino-acid chain; its full sequence is Restriction of telomere capping protein 1 (1341 aa).

Residues 1–39 (MSLSPHVENASIPKGSTPIPKNRNVSSIGKGEFLGSSSS) are disordered. WD repeat units lie at residues 207–248 (NKFS…SIDN), 256–296 (EHTR…SKSS), 305–342 (TASDSIRDVKWMPGYNFASKNDQGSSTYGNLKSGYKFA), 367–406 (AHTGPGLCLNWHPNQEYIATGGRDGKCCLWFVGDNANAAE), 439–486 (NTGY…IPKH), and 489–527 (LSETPSLGLVWWDENLIFNIDKGTRINGWDINKEPTVLE). 5 disordered regions span residues 559-593 (PELQPTSSTTCKKHPGTIKNPKNGNPENQGIIGGI), 600-619 (TGLTSFTPERPPTLKAGPTF), 630-651 (ASSFNSSSASLTSLTPQTENRE), 736-765 (KNATETHGDNTTTTNNNDDGDDDDDDDDDD), and 789-830 (NEKV…DRAR). Residues 630–644 (ASSFNSSSASLTSLT) are compositionally biased toward low complexity. Positions 753–765 (DDGDDDDDDDDDD) are enriched in acidic residues. Residues 814-823 (SSISSISASR) show a composition bias toward low complexity. The WD 7 repeat unit spans residues 843–883 (KIQTLVDLISIATHNASVYLSIDDLTNFKIWILIRDSLLWD). 2 disordered regions span residues 941 to 962 (AFRANSDEPSDAEKKPVSKLKE) and 1013 to 1043 (DEHEHQEEEQPHDSPTKSAQFHASPIAKSIP). Composition is skewed to basic and acidic residues over residues 951–962 (DAEKKPVSKLKE) and 1015–1027 (HEHQEEEQPHDSP). Residues S1036, S1080, S1087, S1089, S1123, and S1133 each carry the phosphoserine modification. 2 WD repeats span residues 1129–1169 (SRPD…KQLY) and 1216–1255 (LFGIAADVLKYCPFEDIMGSEGDQSSIRLFCERCGELITN). The RING-type; degenerate zinc finger occupies 1293–1335 (CVLCERPLKKLTMVILPCGHEGHFQCIQEWFLDENEQECPGGC).

This sequence belongs to the WD repeat RTC1 family. As to quaternary structure, component of the SEA complex composed of at least IML1/SEA1, RTC1/SEA2, MTC5/SEA3, NPR2, NPR3, SEA4, SEC13 and SEH1. Interacts with ribosomes.

The protein localises to the vacuole membrane. Component of the SEA complex which coats the vacuolar membrane and is involved in intracellular trafficking, autophagy, response to nitrogen starvation, and amino acid biogenesis. May be involved in a process influencing telomere capping. This is Restriction of telomere capping protein 1 (RTC1) from Saccharomyces cerevisiae (strain ATCC 204508 / S288c) (Baker's yeast).